Reading from the N-terminus, the 35-residue chain is MPRRRRRASRPIRRRRRARRSTAVRRRRRVVRRRR.

The segment at Met1–Arg35 is disordered. Residues Ser9 and Ser21 each carry the phosphoserine modification.

Phosphorylated in immature sperm. Dephosphorylated in mature sperm allowing a stronger interaction with DNA. Gonads.

The protein resides in the nucleus. It localises to the chromosome. Protamines substitute for histones in the chromatin of sperm during the haploid phase of spermatogenesis. They compact sperm DNA into a highly condensed, stable and inactive complex. This chain is Sperm protamine alpha isoform 2, found in Scomber scombrus (Atlantic mackerel).